The sequence spans 864 residues: MLGRKLGKKTAQAKGRGAAAAKELGLFVDFSPEDMMLGIPDDPDDGDLEAELAALTGVKAVSKPKPKGKAPLPMEEIEKMAQDCMTDMTGEDDDDDLEEDEELLAELQDVVGEEEEVEQSQPSDTEESEPSASETQEHTEPEQQVNSSVAEIQHNLQVPAGGMLQVLEERIGNYKEAISNAKLSNESAKARRYERGLKTLESMLSAARQGRTVIEADIPPPVACGKPAVSPTTDVPTTDTSKQGLGDLNDVPMETTEAVTNLEKPEDPVSKATTNDGGAVEKTHVASENDTDSKTVLLLRQRDYKLAALKAKQTGDIEKAKEYMKISKKFSVVLEALESGQPVDLSNMPAAPEDHEAMVTESKIIAHPTPAPPVSNILNTQGSSVGSLLQALQQRMEKYKSAAQQAKSSGDDRKARMHERIAKQYQDTIRAQKAGRQVNLAELPVPPGFPPLPGMEQTEEEGSVEKALEAAQKLAKTAGEDVDDDEDECQAKPPGHPKPTQLVKPLVMPAISDNEERLLPIKAPVKVASEETFPPAVQEQLEFLEHRKKQYRKAALQAKQKNDLEQAKQHMRVAHTLQVSIDQVKSGKLVDISKVPSLPDDEESDFVVVEHEDIKSPQNSEDVYNMLMKLLHEQHEKCIRYSKQFTQMGNVAETTRFENMAEDCKKNCEILQLSQAQGLDPPPYHFEDKTLKIVRVFSELSSTEMLLIIVRGINLPAPSGVAPNDLDAYVKFEFPYPSSEQPQKNKTLVIKNTNSPEYEQSFKLNINRNHRGFKRVIQTKGIKFEIFHKGFFLVRSDKQVGSASVKLDKLETQCEIREIVEVFDGRKPTGGKLEIKVRLRDPLNGQDLQVVTEKWLVMGHVPRK.

The interval 82 to 154 (QDCMTDMTGE…VNSSVAEIQH (73 aa)) is disordered. Composition is skewed to acidic residues over residues 89-104 (TGED…EELL) and 111-129 (VGEE…EESE). Residues 91–118 (EDDDDDLEEDEELLAELQDVVGEEEEVE) are a coiled coil. Residues 142-154 (EQQVNSSVAEIQH) are compositionally biased toward polar residues. Positions 162–209 (GMLQVLEERIGNYKEAISNAKLSNESAKARRYERGLKTLESMLSAARQ) form a coiled coil. Residues 218–249 (IPPPVACGKPAVSPTTDVPTTDTSKQGLGDLN) are disordered. Residues 229–241 (VSPTTDVPTTDTS) show a composition bias toward low complexity. Residues 385-412 (VGSLLQALQQRMEKYKSAAQQAKSSGDD) are a coiled coil. Disordered stretches follow at residues 441–463 (AELP…EEGS) and 478–502 (AGED…PTQL). The span at 444-453 (PVPPGFPPLP) shows a compositional bias: pro residues. Coiled-coil stretches lie at residues 464–488 (VEKA…DEDE) and 535–564 (PAVQ…KNDL). The C2 domain maps to 685-820 (HFEDKTLKIV…ETQCEIREIV (136 aa)).

Belongs to the CC2D1 family.

The polypeptide is Coiled-coil and C2 domain-containing protein 1B (cc2d1b) (Xenopus laevis (African clawed frog)).